A 194-amino-acid chain; its full sequence is Phosphoheptose isomerase (194 aa).

An SIS domain is found at 37-194; that stretch reads IAKSFKNKNK…IIEKEMKKIN (158 aa). 52-54 is a substrate binding site; it reads NGG. Positions 61 and 65 each coordinate Zn(2+). Residues glutamate 65, 93–94, 119–121, serine 124, and glutamine 172 each bind substrate; these read ND and STS. The Zn(2+) site is built by glutamine 172 and histidine 180.

Belongs to the SIS family. GmhA subfamily. Homotetramer. Requires Zn(2+) as cofactor.

The protein localises to the cytoplasm. It catalyses the reaction 2 D-sedoheptulose 7-phosphate = D-glycero-alpha-D-manno-heptose 7-phosphate + D-glycero-beta-D-manno-heptose 7-phosphate. Its pathway is carbohydrate biosynthesis; D-glycero-D-manno-heptose 7-phosphate biosynthesis; D-glycero-alpha-D-manno-heptose 7-phosphate and D-glycero-beta-D-manno-heptose 7-phosphate from sedoheptulose 7-phosphate: step 1/1. Catalyzes the isomerization of sedoheptulose 7-phosphate in D-glycero-D-manno-heptose 7-phosphate. This Buchnera aphidicola subsp. Schizaphis graminum (strain Sg) protein is Phosphoheptose isomerase.